The sequence spans 547 residues: Dihydroxy-acid dehydratase (547 aa).

Asp78 contributes to the Mg(2+) binding site. Cys119 contacts [2Fe-2S] cluster. Residues Asp120 and Lys121 each contribute to the Mg(2+) site. Residue Lys121 is modified to N6-carboxylysine. Cys191 is a binding site for [2Fe-2S] cluster. Glu439 serves as a coordination point for Mg(2+). The active-site Proton acceptor is Ser464.

The protein belongs to the IlvD/Edd family. In terms of assembly, homodimer. [2Fe-2S] cluster serves as cofactor. It depends on Mg(2+) as a cofactor.

The catalysed reaction is (2R)-2,3-dihydroxy-3-methylbutanoate = 3-methyl-2-oxobutanoate + H2O. It catalyses the reaction (2R,3R)-2,3-dihydroxy-3-methylpentanoate = (S)-3-methyl-2-oxopentanoate + H2O. The protein operates within amino-acid biosynthesis; L-isoleucine biosynthesis; L-isoleucine from 2-oxobutanoate: step 3/4. Its pathway is amino-acid biosynthesis; L-valine biosynthesis; L-valine from pyruvate: step 3/4. Functionally, functions in the biosynthesis of branched-chain amino acids. Catalyzes the dehydration of (2R,3R)-2,3-dihydroxy-3-methylpentanoate (2,3-dihydroxy-3-methylvalerate) into 2-oxo-3-methylpentanoate (2-oxo-3-methylvalerate) and of (2R)-2,3-dihydroxy-3-methylbutanoate (2,3-dihydroxyisovalerate) into 2-oxo-3-methylbutanoate (2-oxoisovalerate), the penultimate precursor to L-isoleucine and L-valine, respectively. The sequence is that of Dihydroxy-acid dehydratase from Methanospirillum hungatei JF-1 (strain ATCC 27890 / DSM 864 / NBRC 100397 / JF-1).